The sequence spans 445 residues: Exodeoxyribonuclease 7 large subunit (445 aa).

The protein belongs to the XseA family. Heterooligomer composed of large and small subunits.

It is found in the cytoplasm. The catalysed reaction is Exonucleolytic cleavage in either 5'- to 3'- or 3'- to 5'-direction to yield nucleoside 5'-phosphates.. Functionally, bidirectionally degrades single-stranded DNA into large acid-insoluble oligonucleotides, which are then degraded further into small acid-soluble oligonucleotides. The protein is Exodeoxyribonuclease 7 large subunit of Xanthomonas oryzae pv. oryzae (strain KACC10331 / KXO85).